Consider the following 501-residue polypeptide: Lysine--tRNA ligase (501 aa).

Residues E404 and E411 each coordinate Mg(2+).

Belongs to the class-II aminoacyl-tRNA synthetase family. Homodimer. It depends on Mg(2+) as a cofactor.

Its subcellular location is the cytoplasm. It catalyses the reaction tRNA(Lys) + L-lysine + ATP = L-lysyl-tRNA(Lys) + AMP + diphosphate. The sequence is that of Lysine--tRNA ligase from Campylobacter jejuni subsp. doylei (strain ATCC BAA-1458 / RM4099 / 269.97).